The following is a 172-amino-acid chain: Small ribosomal subunit protein uS5 (172 aa).

In terms of domain architecture, S5 DRBM spans 13-76; that stretch reads LVEKMISVNR…EQARHNMMKI (64 aa).

Belongs to the universal ribosomal protein uS5 family. As to quaternary structure, part of the 30S ribosomal subunit. Contacts proteins S4 and S8.

Functionally, with S4 and S12 plays an important role in translational accuracy. In terms of biological role, located at the back of the 30S subunit body where it stabilizes the conformation of the head with respect to the body. This is Small ribosomal subunit protein uS5 from Chromobacterium violaceum (strain ATCC 12472 / DSM 30191 / JCM 1249 / CCUG 213 / NBRC 12614 / NCIMB 9131 / NCTC 9757 / MK).